Consider the following 93-residue polypeptide: Beta-defensin 128 (93 aa).

The signal sequence occupies residues 1–18; it reads MKLFLVLIILLFEVLTDG. Disulfide bonds link cysteine 24–cysteine 52, cysteine 32–cysteine 46, and cysteine 36–cysteine 53.

This sequence belongs to the beta-defensin family.

The protein localises to the secreted. In terms of biological role, has antibacterial activity. This Pongo pygmaeus (Bornean orangutan) protein is Beta-defensin 128 (DEFB128).